The sequence spans 492 residues: Katanin p60 ATPase-containing subunit A1 (492 aa).

The tract at residues 80–186 (STPPKASQQE…ESEPKKFDST (107 aa)) is disordered. Positions 145–171 (PNDKGKAVRGREKKDQQNKGKEEKSKS) are enriched in basic and acidic residues. An ATP-binding site is contributed by 250–257 (GPPGTGKT).

Belongs to the AAA ATPase family. Katanin p60 subunit A1 subfamily. Can homooligomerize into hexameric rings, which may be promoted by interaction with microtubules. Interacts with KATNB1, which may serve as a targeting subunit.

It localises to the cytoplasm. It is found in the cytoskeleton. The protein resides in the microtubule organizing center. The protein localises to the centrosome. Its subcellular location is the spindle pole. It localises to the spindle. It catalyses the reaction n ATP + n H2O + a microtubule = n ADP + n phosphate + (n+1) alpha/beta tubulin heterodimers.. With respect to regulation, ATPase activity is stimulated by microtubules, which promote homooligomerization. ATP-dependent microtubule severing is stimulated by interaction with KATNB1. Catalytic subunit of a complex which severs microtubules in an ATP-dependent manner. Microtubule severing may promote rapid reorganization of cellular microtubule arrays and the release of microtubules from the centrosome following nucleation. The protein is Katanin p60 ATPase-containing subunit A1 of Gallus gallus (Chicken).